Consider the following 552-residue polypeptide: MGKHLKNESSSPNHGKYNHKLGWLAGMLHVLDFHHWRTKNRPICWKTPRTHSLMRETEEQEPFLDSKINDSKMLSVVADNKPTRPETKLKKTMTTKQVTEYVDFLEILRKEDVFVKIMKDQVQIKSNPRVLPKSGSFPISGSSRPARIQHKQKENWYAPKQNGAVLTLKVPRDTSQECKPISPSHGSADDDHGFNHAIINGFREIKKLLKNTLKDRNRTKKKKKKKVLDVAKDDYVGRYSQLLKQISRREGGDLRSKSLKLSYEEKKSDSRDNKPQFFRRISSLSSLEVLGSFLTDLPRDSSTSNQETRISEDQDTNFGAKKSVLSSESPVRAEKEEKYEVQEERSQENHLDSSNQRILQQEPDSVPSTNKTAEKTETLLPQGLGLSSLEIYKHEEEDEDAYFCYVKKVLKVSGFLENKDNEEKWYSEEQPLNPSLLYELDIQEEETVNDKELLFDLVNEAIVETQNHSQIYFPKTFPYGKRYLDEVWGRVEWSLSGLGAENRDRSLDDIVGRDLLTKSDGWMNLQGESEWLTLELEDLIFDDVLDELLCVY.

The interval 295 to 379 (TDLPRDSSTS…NKTAEKTETL (85 aa)) is disordered. A compositionally biased stretch (basic and acidic residues) spans 331-351 (VRAEKEEKYEVQEERSQENHL). A compositionally biased stretch (polar residues) spans 352–371 (DSSNQRILQQEPDSVPSTNK).

This is Protein TRM32 (TRM32) from Arabidopsis thaliana (Mouse-ear cress).